Consider the following 124-residue polypeptide: Small ribosomal subunit protein uS12 (124 aa).

3-methylthioaspartic acid is present on Asp89. Residues 105-124 form a disordered region; sequence QGVKNRKQARSRYGAKKEKS. Positions 108-118 are enriched in basic residues; it reads KNRKQARSRYG.

This sequence belongs to the universal ribosomal protein uS12 family. Part of the 30S ribosomal subunit. Contacts proteins S8 and S17. May interact with IF1 in the 30S initiation complex.

In terms of biological role, with S4 and S5 plays an important role in translational accuracy. Functionally, interacts with and stabilizes bases of the 16S rRNA that are involved in tRNA selection in the A site and with the mRNA backbone. Located at the interface of the 30S and 50S subunits, it traverses the body of the 30S subunit contacting proteins on the other side and probably holding the rRNA structure together. The combined cluster of proteins S8, S12 and S17 appears to hold together the shoulder and platform of the 30S subunit. The polypeptide is Small ribosomal subunit protein uS12 (Mycobacterium sp. (strain JLS)).